The sequence spans 404 residues: Cysteine desulfurase IscS (404 aa).

Pyridoxal 5'-phosphate contacts are provided by residues 75–76 (AT), Asn155, Gln183, and 203–205 (SSH). Residue Lys206 is modified to N6-(pyridoxal phosphate)lysine. Thr243 is a binding site for pyridoxal 5'-phosphate. Cys328 (cysteine persulfide intermediate) is an active-site residue. Cys328 provides a ligand contact to [2Fe-2S] cluster.

Belongs to the class-V pyridoxal-phosphate-dependent aminotransferase family. NifS/IscS subfamily. Homodimer. Forms a heterotetramer with IscU, interacts with other sulfur acceptors. The cofactor is pyridoxal 5'-phosphate.

The protein localises to the cytoplasm. It carries out the reaction (sulfur carrier)-H + L-cysteine = (sulfur carrier)-SH + L-alanine. The protein operates within cofactor biosynthesis; iron-sulfur cluster biosynthesis. Functionally, master enzyme that delivers sulfur to a number of partners involved in Fe-S cluster assembly, tRNA modification or cofactor biosynthesis. Catalyzes the removal of elemental sulfur atoms from cysteine to produce alanine. Functions as a sulfur delivery protein for Fe-S cluster synthesis onto IscU, an Fe-S scaffold assembly protein, as well as other S acceptor proteins. The protein is Cysteine desulfurase IscS of Histophilus somni (strain 129Pt) (Haemophilus somnus).